A 306-amino-acid polypeptide reads, in one-letter code: uncharacterized protein (306 aa).

The Cytoplasmic portion of the chain corresponds to 1–6 (MRFRQL). A helical membrane pass occupies residues 7-27 (LPLFGALFALYIIWGSTYFVI). In terms of domain architecture, EamA 1 spans 18–141 (IIWGSTYFVI…GLAGIIMLNS (124 aa)). Over 28 to 36 (RIGVESWPP) the chain is Periplasmic. A helical membrane pass occupies residues 37–57 (LMMAGVRFLAAGILLLAFLLL). The Cytoplasmic segment spans residues 58-67 (RGHKLPPLRP). Residues 68 to 88 (LLNAALIGLLLLAVGNGMVTV) traverse the membrane as a helical segment. Residues 89–93 (AEHQN) lie on the Periplasmic side of the membrane. A helical membrane pass occupies residues 94 to 114 (VPSGIAAVVVATVPLFTLCFS). Residues 115-125 (RLFGIKTRKLE) are Cytoplasmic-facing. A helical membrane pass occupies residues 126–146 (WVGIAIGLAGIIMLNSGGNLS). Over 147–148 (GN) the chain is Periplasmic. A helical transmembrane segment spans residues 149-169 (PWGAILILIGSISWAFGSVYG). Residues 160–285 (ISWAFGSVYG…IVFAVVLVTL (126 aa)) enclose the EamA 2 domain. The Cytoplasmic segment spans residues 170–173 (SRIT). Residues 174 to 194 (LPVGMMAGAIEMLAAGVVLMI) traverse the membrane as a helical segment. Residues 195–206 (ASMIAGEKLTAL) are Periplasmic-facing. Residues 207–227 (PSLSGFLAVGYLALFGSIIAI) form a helical membrane-spanning segment. Residues 228-239 (NAYMYLIRNVSP) lie on the Cytoplasmic side of the membrane. The helical transmembrane segment at 240–260 (ALATSYAYVNPVVAVLLGTGL) threads the bilayer. Topologically, residues 261-269 (GGETLSKIE) are periplasmic. The chain crosses the membrane as a helical span at residues 270–290 (WLALGVIVFAVVLVTLGKYLF). The Cytoplasmic portion of the chain corresponds to 291-306 (PAKPVVAPVIQDASSE).

Belongs to the EamA transporter family.

The protein resides in the cell inner membrane. This is an uncharacterized protein from Escherichia coli O157:H7.